A 216-amino-acid polypeptide reads, in one-letter code: Small ribosomal subunit protein uS3 (216 aa).

Residues 38 to 106 form the KH type-2 domain; it reads IRGYLKKKLY…EIIINILEVR (69 aa).

The protein belongs to the universal ribosomal protein uS3 family. As to quaternary structure, part of the 30S ribosomal subunit. Forms a tight complex with proteins S10 and S14.

Functionally, binds the lower part of the 30S subunit head. Binds mRNA in the 70S ribosome, positioning it for translation. This chain is Small ribosomal subunit protein uS3, found in Syntrophus aciditrophicus (strain SB).